The following is a 426-amino-acid chain: MTRHAEKRVVITGIGVRAPGGAGTAAFWDLLTAGRTATRTISLFDAAPYRSRIAGEIDFDPIGEGLSPRQASTYDRATQLAVVCAREALKDSGLDPAAVNPERIGVSIGTAVGCTTGLDREYARVSEGGSRWLVDHTLAVEQLFDYFVPTSICREVAWEAGAEGPVTVVSTGCTSGLDAVGYGTELIRDGRADVVVCGATDAPISPITVACFDAIKATSANNDDPAHASRPFDRNRDGFVLGEGSAVFVLEELSAARRRGAHAYAEVRGFATRSNAFHMTGLKPDGREMAEAITAALDQARRTGDDLHYINAHGSGTRQNDRHETAAFKRSLGQRAYDVPVSSIKSMIGHSLGAIGSLELAACALAIEHGVIPPTANYEEPDPECDLDYVPNVAREQRVDTVLSVGSGFGGFQSAAVLARPKETRS.

Residues 6-420 (EKRVVITGIG…GFQSAAVLAR (415 aa)) form the Ketosynthase family 3 (KS3) domain. Active-site for beta-ketoacyl synthase activity residues include Cys-173, His-313, and His-350.

This sequence belongs to the thiolase-like superfamily. Beta-ketoacyl-ACP synthases family. The tetracenomycin polyketide synthase (TCM PKS) is composed of a ketosynthase complex (TcmKL), an acyl carrier protein (TcmM), a cyclase (TcmN) and a probable second cyclase (TcmJ). TcmK and TcmL form a heterodimeric complex.

It carries out the reaction 10 malonyl-CoA + 8 H(+) = tetracenomycin F2 + 10 CO2 + 10 CoA + 2 H2O. Its pathway is antibiotic biosynthesis; tetracenomycin C biosynthesis. Functionally, involved in the biosynthesis of tetracenomycin C (TCM C). Part of a type II polyketide synthase (PKS) that catalyzes the synthesis of tetracenomycin F2 (TCM F2), a precursor of TCM C, from malonyl-CoA. TcmK and TcmL form a heterodimeric alpha-beta complex that catalyzes the condensation reactions between the growing acyl-enzyme chain and the malonyl-CoA extender units. The protein is Tetracenomycin polyketide synthase ketoacyl synthase alpha subunit of Streptomyces glaucescens.